Here is a 923-residue protein sequence, read N- to C-terminus: Isoleucine--tRNA ligase (923 aa).

A 'HIGH' region motif is present at residues 57 to 67; sequence PYANGDIHMGH. L-isoleucyl-5'-AMP is bound at residue E553. The short motif at 594-598 is the 'KMSKS' region element; the sequence is KMSKS. K597 is an ATP binding site. The Zn(2+) site is built by C888, C891, C908, and C911.

This sequence belongs to the class-I aminoacyl-tRNA synthetase family. IleS type 1 subfamily. As to quaternary structure, monomer. Requires Zn(2+) as cofactor.

It is found in the cytoplasm. It carries out the reaction tRNA(Ile) + L-isoleucine + ATP = L-isoleucyl-tRNA(Ile) + AMP + diphosphate. In terms of biological role, catalyzes the attachment of isoleucine to tRNA(Ile). As IleRS can inadvertently accommodate and process structurally similar amino acids such as valine, to avoid such errors it has two additional distinct tRNA(Ile)-dependent editing activities. One activity is designated as 'pretransfer' editing and involves the hydrolysis of activated Val-AMP. The other activity is designated 'posttransfer' editing and involves deacylation of mischarged Val-tRNA(Ile). The chain is Isoleucine--tRNA ligase from Shouchella clausii (strain KSM-K16) (Alkalihalobacillus clausii).